Here is a 178-residue protein sequence, read N- to C-terminus: Mediator of RNA polymerase II transcription subunit 31 (178 aa).

Positions 129–140 (EGQELEESEDEA) are enriched in acidic residues. The interval 129–178 (EGQELEESEDEADIRQKDTEDEDDEETMKKPDADTAEKNSTTSTVSKKEK) is disordered. Residues 155–165 (TMKKPDADTAE) show a composition bias toward basic and acidic residues. The span at 166 to 178 (KNSTTSTVSKKEK) shows a compositional bias: polar residues.

It belongs to the Mediator complex subunit 31 family. Component of the Mediator complex.

It is found in the nucleus. Component of the Mediator complex, a coactivator involved in the regulated transcription of nearly all RNA polymerase II-dependent genes. Mediator functions as a bridge to convey information from gene-specific regulatory proteins to the basal RNA polymerase II transcription machinery. Mediator is recruited to promoters by direct interactions with regulatory proteins and serves as a scaffold for the assembly of a functional preinitiation complex with RNA polymerase II and the general transcription factors. The polypeptide is Mediator of RNA polymerase II transcription subunit 31 (Caenorhabditis elegans).